Here is a 630-residue protein sequence, read N- to C-terminus: tRNA uridine 5-carboxymethylaminomethyl modification enzyme MnmG (630 aa).

FAD is bound at residue 15–20; that stretch reads GAGHAG. Position 276–290 (276–290) interacts with NAD(+); the sequence is GPRYCPSIEDKIVRF.

Belongs to the MnmG family. Homodimer. Heterotetramer of two MnmE and two MnmG subunits. It depends on FAD as a cofactor.

Its subcellular location is the cytoplasm. Functionally, NAD-binding protein involved in the addition of a carboxymethylaminomethyl (cmnm) group at the wobble position (U34) of certain tRNAs, forming tRNA-cmnm(5)s(2)U34. This Latilactobacillus sakei subsp. sakei (strain 23K) (Lactobacillus sakei subsp. sakei) protein is tRNA uridine 5-carboxymethylaminomethyl modification enzyme MnmG.